Here is a 344-residue protein sequence, read N- to C-terminus: MTNMMRALVKTRPEVGLWMERVPVPEVGPNDVLIRVRKSAICGTDVHIWNWDQWAQKTIPVPMVVGHEFMGEIVEVGPAVTKHHVGERVSGEGHIVCGKCRNCRAGRGHLCRNTLGVGVNRPGSFAEFVCLPEYNVVSIPDDVPDEIAAIFDPFGNAVHTALSFDLVGEDVLVTGAGPIGIMGALVAKRCGARKVVITDINPVRLDLARKVGIDYVVDASKENLADVMRVIGMTEGFDVGLEMSGAAPAFRDMIDKMNNGGKIAILGIAPAGFEIDWNKVIFKMLNLKGIYGREMFETWYKMIAFVQGGLDLSQIITHRIGIDEFGDGFEAMRSGNSGKVVMDW.

Residue cysteine 42 coordinates Zn(2+). Catalysis depends on charge relay system residues threonine 44 and histidine 47. The Zn(2+) site is built by histidine 67, glutamate 68, cysteine 97, cysteine 100, cysteine 103, and cysteine 111. NAD(+)-binding positions include isoleucine 179, aspartate 199, arginine 204, 266–268, and 290–291; these read LGI and IY.

It belongs to the zinc-containing alcohol dehydrogenase family. As to quaternary structure, homotetramer. Zn(2+) serves as cofactor.

Its subcellular location is the cytoplasm. It catalyses the reaction L-threonine + NAD(+) = (2S)-2-amino-3-oxobutanoate + NADH + H(+). It functions in the pathway amino-acid degradation; L-threonine degradation via oxydo-reductase pathway; glycine from L-threonine: step 1/2. Its function is as follows. Catalyzes the NAD(+)-dependent oxidation of L-threonine to 2-amino-3-ketobutyrate. In Sinorhizobium medicae (strain WSM419) (Ensifer medicae), this protein is L-threonine 3-dehydrogenase.